The primary structure comprises 444 residues: Acyl-CoA (8-3)-desaturase (444 aa).

Residue Met1 is modified to N-acetylmethionine. The Cytoplasmic segment spans residues Met1 to Arg121. In terms of domain architecture, Cytochrome b5 heme-binding spans Pro17 to Ser94. The helical transmembrane segment at Met122–Leu142 threads the bilayer. Over Asp143–Ala145 the chain is Lumenal. A helical transmembrane segment spans residues Ala146–Val170. Over Gln171–Phe267 the chain is Cytoplasmic. Residues His179–His183 carry the Histidine box-1 motif. The Histidine box-2 motif lies at His216–His220. Residues Leu268–Ile288 traverse the membrane as a helical segment. Residues Gln289 to Arg305 are Lumenal-facing. A helical membrane pass occupies residues Phe306–Val326. Topologically, residues Arg327–Gln444 are cytoplasmic. Positions Gln382–His386 match the Histidine box-3 motif.

It belongs to the fatty acid desaturase type 1 family. In terms of tissue distribution, widely expressed, with highest levels in liver, brain, adrenal gland and heart. Highly expressed in fetal liver and brain.

It is found in the endoplasmic reticulum membrane. The protein localises to the mitochondrion. The catalysed reaction is (8Z,11Z,14Z)-eicosatrienoyl-CoA + 2 Fe(II)-[cytochrome b5] + O2 + 2 H(+) = (5Z,8Z,11Z,14Z)-eicosatetraenoyl-CoA + 2 Fe(III)-[cytochrome b5] + 2 H2O. The enzyme catalyses (8Z,11Z,14Z,17Z)-eicosatetraenoyl-CoA + 2 Fe(II)-[cytochrome b5] + O2 + 2 H(+) = (5Z,8Z,11Z,14Z,17Z)-eicosapentaenoyl-CoA + 2 Fe(III)-[cytochrome b5] + 2 H2O. It carries out the reaction (11E)-octadecenoyl-CoA + 2 Fe(II)-[cytochrome b5] + O2 + 2 H(+) = (5Z,11E)-octadecadienoyl-CoA + 2 Fe(III)-[cytochrome b5] + 2 H2O. It participates in lipid metabolism; polyunsaturated fatty acid biosynthesis. Its function is as follows. Acts as a front-end fatty acyl-coenzyme A (CoA) desaturase that introduces a cis double bond at carbon 5 located between a preexisting double bond and the carboxyl end of the fatty acyl chain. Involved in biosynthesis of highly unsaturated fatty acids (HUFA) from the essential polyunsaturated fatty acids (PUFA) linoleic acid (LA) (18:2n-6) and alpha-linolenic acid (ALA) (18:3n-3) precursors. Specifically, desaturates dihomo-gamma-linoleoate (DGLA) (20:3n-6) and eicosatetraenoate (ETA) (20:4n-3) to generate arachidonate (AA) (20:4n-6) and eicosapentaenoate (EPA) (20:5n-3), respectively. As a rate limiting enzyme for DGLA (20:3n-6) and AA (20:4n-6)-derived eicosanoid biosynthesis, controls the metabolism of inflammatory lipids like prostaglandin E2, critical for efficient acute inflammatory response and maintenance of epithelium homeostasis. Contributes to membrane phospholipid biosynthesis by providing AA (20:4n-6) as a major acyl chain esterified into phospholipids. In particular, regulates phosphatidylinositol-4,5-bisphosphate levels, modulating inflammatory cytokine production in T-cells. Also desaturates (11E)-octadecenoate (trans-vaccenoate)(18:1n-9), a metabolite in the biohydrogenation pathway of LA (18:2n-6). Functionally, does not exhibit any catalytic activity toward 20:3n-6, but it may enhance FADS2 activity. This is Acyl-CoA (8-3)-desaturase from Homo sapiens (Human).